Here is a 350-residue protein sequence, read N- to C-terminus: Galactokinase (350 aa).

14–17 (EHTD) is a substrate binding site. ATP-binding positions include S46 and 96–102 (GAGLSSS). Residues S102 and E134 each contribute to the Mg(2+) site. Residue D146 is the Proton acceptor of the active site. Residue Y196 coordinates substrate.

The protein belongs to the GHMP kinase family. GalK subfamily.

It localises to the cytoplasm. It carries out the reaction alpha-D-galactose + ATP = alpha-D-galactose 1-phosphate + ADP + H(+). The protein operates within carbohydrate metabolism; galactose metabolism. In terms of biological role, catalyzes the transfer of the gamma-phosphate of ATP to D-galactose to form alpha-D-galactose-1-phosphate (Gal-1-P). The polypeptide is Galactokinase (Thermotoga neapolitana).